We begin with the raw amino-acid sequence, 92 residues long: N(2)-fixation sustaining protein CowN (92 aa).

The protein belongs to the CowN family.

Its function is as follows. Is required to sustain N(2)-dependent growth in the presence of low levels of carbon monoxide (CO). Probably acts by protecting the N(2) fixation ability of the nitrogenase complex, which is inactivated in the presence of CO. This chain is N(2)-fixation sustaining protein CowN, found in Rhodopseudomonas palustris (strain HaA2).